Reading from the N-terminus, the 103-residue chain is Cell division protein FtsB (103 aa).

The Cytoplasmic portion of the chain corresponds to Met-1–Lys-3. Residues Leu-4–Phe-21 traverse the membrane as a helical segment. Residues Gly-22–Arg-103 are Periplasmic-facing. Residues Arg-31 to Ala-71 adopt a coiled-coil conformation.

It belongs to the FtsB family. As to quaternary structure, part of a complex composed of FtsB, FtsL and FtsQ.

Its subcellular location is the cell inner membrane. In terms of biological role, essential cell division protein. May link together the upstream cell division proteins, which are predominantly cytoplasmic, with the downstream cell division proteins, which are predominantly periplasmic. This Escherichia coli O157:H7 protein is Cell division protein FtsB.